The following is a 780-amino-acid chain: Ribosome biogenesis protein BOP1 homolog (780 aa).

A compositionally biased stretch (basic residues) spans 1–11 (MTKKQAIKRKV). Residues 1–155 (MTKKQAIKRK…DSDTSDEEDI (155 aa)) form a disordered region. The segment covering 17 to 26 (TNEQSSASEP) has biased composition (polar residues). Acidic residues-rich tracts occupy residues 44–53 (EDTTDDEGID), 60–72 (SSEDLEFESDEEG), 83–113 (AEGDAEEDEDDDEEEDEDSDEASEDNDDAEE), and 145–154 (EDSDTSDEED). WD repeat units follow at residues 441–482 (GHTD…RTIE), 484–522 (NDVVRCVAWCPNAKLSIIAVATGSRLLLINPKVGDKLLI), 566–608 (THFK…SQIP), 611–649 (KSKGLIQCVLFHPVKPCFFVATQHNIRIYDLVKQELIKK), 652–691 (TNSKWISGMSIHPKGDNLLVSTYDKKMLWFDLDLSTKPYQ), 695–734 (LHRNAVRSVAFHLRYPLFASGSDDQAVIVSHGMVYNDLLQ), and 750–780 (RDEFGVLDVSWHPVQPWVFSTGADCTIRLYT).

It belongs to the WD repeat BOP1/ERB1 family.

It is found in the nucleus. The protein localises to the nucleolus. The protein resides in the nucleoplasm. Functionally, required for maturation of ribosomal RNAs and formation of the large ribosomal subunit. The protein is Ribosome biogenesis protein BOP1 homolog of Drosophila virilis (Fruit fly).